Reading from the N-terminus, the 304-residue chain is Recombination-associated protein RdgC (304 aa).

This sequence belongs to the RdgC family.

It localises to the cytoplasm. Its subcellular location is the nucleoid. May be involved in recombination. The chain is Recombination-associated protein RdgC from Shewanella baltica (strain OS185).